Here is a 320-residue protein sequence, read N- to C-terminus: Acetyl-coenzyme A carboxylase carboxyl transferase subunit alpha (320 aa).

The region spanning 34-288 (RLEEALEAAR…GEALERVLAG (255 aa)) is the CoA carboxyltransferase C-terminal domain.

This sequence belongs to the AccA family. Acetyl-CoA carboxylase is a heterohexamer composed of biotin carboxyl carrier protein (AccB), biotin carboxylase (AccC) and two subunits each of ACCase subunit alpha (AccA) and ACCase subunit beta (AccD).

It localises to the cytoplasm. The catalysed reaction is N(6)-carboxybiotinyl-L-lysyl-[protein] + acetyl-CoA = N(6)-biotinyl-L-lysyl-[protein] + malonyl-CoA. The protein operates within lipid metabolism; malonyl-CoA biosynthesis; malonyl-CoA from acetyl-CoA: step 1/1. In terms of biological role, component of the acetyl coenzyme A carboxylase (ACC) complex. First, biotin carboxylase catalyzes the carboxylation of biotin on its carrier protein (BCCP) and then the CO(2) group is transferred by the carboxyltransferase to acetyl-CoA to form malonyl-CoA. The polypeptide is Acetyl-coenzyme A carboxylase carboxyl transferase subunit alpha (Rubrobacter xylanophilus (strain DSM 9941 / JCM 11954 / NBRC 16129 / PRD-1)).